The chain runs to 372 residues: Dual-specificity RNA methyltransferase RlmN (372 aa).

Catalysis depends on Glu92, which acts as the Proton acceptor. Residues 98–337 (ETDRATLCVS…VILRKTRGDD (240 aa)) enclose the Radical SAM core domain. The cysteines at positions 105 and 342 are disulfide-linked. 3 residues coordinate [4Fe-4S] cluster: Cys112, Cys116, and Cys119. S-adenosyl-L-methionine contacts are provided by residues 166–167 (GE), Ser198, 220–222 (SLH), and Asn299. Cys342 (S-methylcysteine intermediate) is an active-site residue.

The protein belongs to the radical SAM superfamily. RlmN family. [4Fe-4S] cluster serves as cofactor.

The protein localises to the cytoplasm. The catalysed reaction is adenosine(2503) in 23S rRNA + 2 reduced [2Fe-2S]-[ferredoxin] + 2 S-adenosyl-L-methionine = 2-methyladenosine(2503) in 23S rRNA + 5'-deoxyadenosine + L-methionine + 2 oxidized [2Fe-2S]-[ferredoxin] + S-adenosyl-L-homocysteine. It catalyses the reaction adenosine(37) in tRNA + 2 reduced [2Fe-2S]-[ferredoxin] + 2 S-adenosyl-L-methionine = 2-methyladenosine(37) in tRNA + 5'-deoxyadenosine + L-methionine + 2 oxidized [2Fe-2S]-[ferredoxin] + S-adenosyl-L-homocysteine. Its function is as follows. Specifically methylates position 2 of adenine 2503 in 23S rRNA and position 2 of adenine 37 in tRNAs. m2A2503 modification seems to play a crucial role in the proofreading step occurring at the peptidyl transferase center and thus would serve to optimize ribosomal fidelity. In Histophilus somni (strain 129Pt) (Haemophilus somnus), this protein is Dual-specificity RNA methyltransferase RlmN.